A 1054-amino-acid chain; its full sequence is Probable sucrose-phosphate synthase 1 (1054 aa).

Residues Arg-104–Val-115 are compositionally biased toward basic and acidic residues. Disordered stretches follow at residues Arg-104 to Gly-125, Leu-674 to Leu-693, and Asp-708 to Ala-727.

Belongs to the glycosyltransferase 1 family. In terms of assembly, homodimer or homotetramer.

The enzyme catalyses beta-D-fructose 6-phosphate + UDP-alpha-D-glucose = sucrose 6(F)-phosphate + UDP + H(+). It participates in glycan biosynthesis; sucrose biosynthesis; sucrose from D-fructose 6-phosphate and UDP-alpha-D-glucose: step 1/2. Its activity is regulated as follows. Activity is regulated by phosphorylation and moderated by concentration of metabolites and light. Functionally, plays a role in photosynthetic sucrose synthesis by catalyzing the rate-limiting step of sucrose biosynthesis from UDP-glucose and fructose- 6-phosphate. Involved in the regulation of carbon partitioning in the leaves of plants. May regulate the synthesis of sucrose and therefore play a major role as a limiting factor in the export of photoassimilates out of the leaf. Plays a role for sucrose availability that is essential for plant growth and fiber elongation. In Craterostigma plantagineum (Blue gem), this protein is Probable sucrose-phosphate synthase 1 (SPS1).